The sequence spans 324 residues: MKRIPIKELIVEHPGKVLILDGGQGTELENRGININSPVWSAAPFTSESFWEPSSQERKVVEEMYRDFMIAGANILMTITYQANFQSISENTSIKTLAAYKRFLDKIVSFTREFIGEERYLIGSIGPWAAHVSCEYTGDYGPHPENIDYYGFFKPQLENFNQNRDIDLIGFETIPNFHELKAILSWDEDIISKPFYIGLSVDDNSLLRDGTTLEEISVHIKGLGNKINKNLLLMGVNCVSFNQSALILKMLHEHLPGMPLLVYPNSGEIYNPKEKTWHRPTNKLDDWETTVKKFVDNGARIIGGCCRTSPKDIAEIASAVDKYS.

Positions 6 to 320 constitute a Hcy-binding domain; it reads IKELIVEHPG…KDIAEIASAV (315 aa). 3 residues coordinate Zn(2+): Cys238, Cys305, and Cys306.

Requires Zn(2+) as cofactor.

The protein localises to the cytoplasm. It carries out the reaction S-methyl-L-methionine + L-homocysteine = 2 L-methionine + H(+). Its function is as follows. Homocysteine S-methyltransferase involved in the conversion of S-adenosylmethionine (AdoMet) to methionine to control the methionine/AdoMet ratio. Also converts S-methylmethionine (SMM) to methionine. The polypeptide is Homocysteine S-methyltransferase 1 (MHT1) (Saccharomyces cerevisiae (strain ATCC 204508 / S288c) (Baker's yeast)).